The chain runs to 457 residues: Cystathionine beta-lyase (457 aa).

The disordered stretch occupies residues 1–41 (MSTPNSDSPAAQAAKKVFSRLDLDGHNLPPSPAPSSPHNGR).

It belongs to the trans-sulfuration enzymes family. It depends on pyridoxal 5'-phosphate as a cofactor.

It localises to the cytoplasm. The protein resides in the nucleus. The enzyme catalyses L,L-cystathionine + H2O = L-homocysteine + pyruvate + NH4(+). It carries out the reaction an S-substituted L-cysteine + H2O = a thiol + pyruvate + NH4(+). It participates in amino-acid biosynthesis; L-methionine biosynthesis via de novo pathway; L-homocysteine from L-cystathionine: step 1/1. Its function is as follows. Involved in de novo synthesis of methionine. The chain is Cystathionine beta-lyase (met-2) from Neurospora crassa (strain ATCC 24698 / 74-OR23-1A / CBS 708.71 / DSM 1257 / FGSC 987).